A 505-amino-acid chain; its full sequence is tRNA-2-methylthio-N(6)-dimethylallyladenosine synthase (505 aa).

Positions 1–39 are disordered; that stretch reads MGQKAKAQAPTTHPRPHTLSSQVAPALPRRPRHAAPESL. Positions 47-162 constitute an MTTase N-terminal domain; the sequence is MKAHLITYGC…IGAALESNER (116 aa). Positions 56, 92, 125, 194, 198, and 201 each coordinate [4Fe-4S] cluster. Residues 180–413 enclose the Radical SAM core domain; it reads PSGKLQAHLT…IARQKDWSAR (234 aa). The region spanning 416–479 is the TRAM domain; that stretch reads AQKVGTVQQV…PHMMYGHILG (64 aa).

This sequence belongs to the methylthiotransferase family. MiaB subfamily. As to quaternary structure, monomer. [4Fe-4S] cluster is required as a cofactor.

The protein resides in the cytoplasm. It catalyses the reaction N(6)-dimethylallyladenosine(37) in tRNA + (sulfur carrier)-SH + AH2 + 2 S-adenosyl-L-methionine = 2-methylsulfanyl-N(6)-dimethylallyladenosine(37) in tRNA + (sulfur carrier)-H + 5'-deoxyadenosine + L-methionine + A + S-adenosyl-L-homocysteine + 2 H(+). In terms of biological role, catalyzes the methylthiolation of N6-(dimethylallyl)adenosine (i(6)A), leading to the formation of 2-methylthio-N6-(dimethylallyl)adenosine (ms(2)i(6)A) at position 37 in tRNAs that read codons beginning with uridine. This Deinococcus radiodurans (strain ATCC 13939 / DSM 20539 / JCM 16871 / CCUG 27074 / LMG 4051 / NBRC 15346 / NCIMB 9279 / VKM B-1422 / R1) protein is tRNA-2-methylthio-N(6)-dimethylallyladenosine synthase.